The primary structure comprises 359 residues: MQTLADLLNTIPAIDPAAMSRAQRHIDGLLKPVGSLGRLEALAIQLAGMPGLNGVPHVGKKAVLVMCADHGVWEEGVAISPKEVTAIQAENMTRGTTGVCVLAAQAGANVYVIDVGIDTAEPIPGLINMRVARGSGNIASAPAMSRHLAEKLLLDVICYTRELAKNGVTLFGVGDLGMANTTPAAAIVSTITGRAPEEVVGIGANLPTDKLANKIDVVRRAITLNQPNPQDGVDVLAKVGGFDLVGMAGVMLGAASCGLPVLLDGFLSYAAALAACQMSPAIKPYLIPSHLSAEKGARIALSHLGLEPYLNMEMRLGEGSGAALAMPIIEAACAIYNNMGELAASNIVLPGNTTSDLNS.

The active-site Proton acceptor is glutamate 318.

It belongs to the CobT family. As to quaternary structure, homodimer.

The catalysed reaction is 5,6-dimethylbenzimidazole + nicotinate beta-D-ribonucleotide = alpha-ribazole 5'-phosphate + nicotinate + H(+). The protein operates within nucleoside biosynthesis; alpha-ribazole biosynthesis; alpha-ribazole from 5,6-dimethylbenzimidazole: step 1/2. Its function is as follows. Catalyzes the synthesis of alpha-ribazole-5'-phosphate from nicotinate mononucleotide (NAMN) and 5,6-dimethylbenzimidazole (DMB). In Shigella sonnei (strain Ss046), this protein is Nicotinate-nucleotide--dimethylbenzimidazole phosphoribosyltransferase.